Here is a 163-residue protein sequence, read N- to C-terminus: UPF0134 protein MPN_139 (163 aa).

Belongs to the UPF0134 family.

The polypeptide is UPF0134 protein MPN_139 (Mycoplasma pneumoniae (strain ATCC 29342 / M129 / Subtype 1) (Mycoplasmoides pneumoniae)).